The primary structure comprises 269 residues: Eukaryotic translation initiation factor 3 subunit G-1 (269 aa).

The RRM domain occupies 188–266 (AAIRISNLSE…LILSVEWSKP (79 aa)).

This sequence belongs to the eIF-3 subunit G family. Component of the eukaryotic translation initiation factor 3 (eIF-3) complex. The eIF-3 complex interacts with pix.

Its subcellular location is the cytoplasm. Functionally, RNA-binding component of the eukaryotic translation initiation factor 3 (eIF-3) complex, which is involved in protein synthesis of a specialized repertoire of mRNAs and, together with other initiation factors, stimulates binding of mRNA and methionyl-tRNAi to the 40S ribosome. The eIF-3 complex specifically targets and initiates translation of a subset of mRNAs involved in cell proliferation. This subunit can bind 18S rRNA. This is Eukaryotic translation initiation factor 3 subunit G-1 from Drosophila virilis (Fruit fly).